We begin with the raw amino-acid sequence, 503 residues long: Aminoaldehyde dehydrogenase 1, peroxisomal (503 aa).

Residues asparagine 27, isoleucine 28, aspartate 99, and leucine 189 each contribute to the Na(+) site. Glycine 238–lysine 245 is an NAD(+) binding site. The active-site Proton acceptor is glutamate 260. Residues cysteine 294 and glutamate 393 each coordinate NAD(+). Cysteine 294 (nucleophile) is an active-site residue. Residues serine 501–leucine 503 carry the Microbody targeting signal motif.

This sequence belongs to the aldehyde dehydrogenase family. As to quaternary structure, forms homodimers.

The protein resides in the peroxisome. The enzyme catalyses 3-aminopropanal + NAD(+) + H2O = beta-alanine + NADH + 2 H(+). It catalyses the reaction 4-aminobutanal + NAD(+) + H2O = 4-aminobutanoate + NADH + 2 H(+). It carries out the reaction 4-guanidinobutanal + NAD(+) + H2O = 4-guanidinobutanoate + NADH + 2 H(+). It participates in amine and polyamine biosynthesis; betaine biosynthesis via choline pathway; betaine from betaine aldehyde: step 1/1. Its function is as follows. Dehydrogenase that catalyzes the oxidation of several aminoaldehydes. Metabolizes and detoxifies aldehyde products of polyamine degradation to non-toxic amino acids. Catalyzes the oxidation of 3-aminopropanal to beta-alanine. Catalyzes the oxidation of 4-aminobutanal to 4-aminobutanoate. Catalyzes the oxidation of 4-guanidinobutanal to 4-guanidinobutanoate. This is Aminoaldehyde dehydrogenase 1, peroxisomal from Pisum sativum (Garden pea).